The following is a 268-amino-acid chain: Microtubule-associated protein RP/EB family member 1 (268 aa).

A2 bears the N-acetylalanine mark. One can recognise a Calponin-homology (CH) domain in the interval 14–116 (NLSRHDMLAW…FVQWFKKFFD (103 aa)). At K66 the chain carries N6-crotonyllysine. A Phosphotyrosine modification is found at Y124. Residues 124 to 268 (YDPVAARQGQ…GGPQEEQEEY (145 aa)) form an interaction with MTUS2/TIP150 region. The segment at 146–180 (LSKPKKPLGSSTAAPQRPIATQRTTAAPKAGPGMV) is disordered. Positions 154 to 170 (GSSTAAPQRPIATQRTT) are enriched in polar residues. The residue at position 155 (S155) is a Phosphoserine. The 71-residue stretch at 185–255 (GVGNGDDEAA…LYATDEGFVI (71 aa)) folds into the EB1 C-terminal domain. Residues 206 to 211 (TVEDLE) are interaction with APC. The segment at 208-268 (EDLEKERDFY…GGPQEEQEEY (61 aa)) is DCTN1-binding. An N6-acetyllysine modification is found at K220. The APC-binding stretch occupies residues 220–242 (KLRNIELICQENEGENDPVLQRI). Positions 232–255 (EGENDPVLQRIVDILYATDEGFVI) are interaction with SKA1.

This sequence belongs to the MAPRE family. Homodimer. Heterodimer with MAPRE3. Interacts (via C-terminal residues 206-211) with APC (via C-terminal residues 2674-2845); the interaction inhibits association with and bundling of F-actin. Interacts with DCTN1, DIAPH1 and DIAPH2. Interacts with DCTN2, TERF1 and dynein intermediate chain. Interacts with CLASP2, DST, KIF2C and STIM1; probably required for their targeting to the growing microtubule plus ends. Interacts with MTUS2; interaction is direct and probably targets MTUS2 to microtubules. Interacts (via C-terminus) with SKA1 (via SXIP motif); the interaction is direct and stabilizes the kinetochore-microtubule attachment of the SKA1 complex. Interacts with APC2. Interacts with CLASP1. Interacts (via C-terminus) with CLIP1. Interacts with SLAIN2 and SLAIN1. Interacts with MACF1. Interacts with KIF18B; this interaction is required for efficient accumulation of KIF18B at microtubule plus ends. Interacts with MISP. Interacts with RABL2/RABL2A; binds preferentially to GTP-bound RABL2. Interacts with KCNAB2. Interacts with KNSTRN. Interacts with NCKAP5L. Interacts with AKAP9. Interacts with PDE4DIP isoform 2/MMG8/SMYLE; this interaction is required for its recruitment to the Golgi apparatus. May form a pericentrosomal complex with AKAP9, CDK5RAP2 and PDE4DIP isoform 2/MMG8/SMYLE; within this complex, MAPRE1 binding to CDK5RAP2 may be mediated by PDE4DIP. Contrary to other mammalian species, does not interact with CDK5RAP2, possibly due to the lack of conservation of the MAPRE1-binding motif in mouse CDK5RAP2. Interacts with AKNA. Interacts with GAS2L1, GAS2L2, and GAS2L3. Interacts with RARRES1 and AGBL2. Post-translationally, acetylation at Lys-220 by KAT2B/PCAF promotes dynamic kinetochore-microtubule interactions in early mitosis. Crotonylated by KAT5 during mitosis, promoting astral microtubule plasticity and dynamic connection between astral microtubules and the cortex during mitotic chromosome segregation, thereby ensuring accurate spindle positioning in mitosis. Decrotonylated by HDAC3. In terms of tissue distribution, expressed within the midpiece of sperm tail (at protein level).

The protein resides in the cytoplasm. Its subcellular location is the cytoskeleton. It is found in the microtubule organizing center. It localises to the centrosome. The protein localises to the spindle. The protein resides in the spindle pole. Its function is as follows. Plus-end tracking protein (+TIP) that binds to the plus-end of microtubules and regulates the dynamics of the microtubule cytoskeleton. Recruits other +TIP proteins to microtubules by binding to a conserved Ser-X-Leu-Pro (SXLP) motif in their polypeptide chains. Promotes cytoplasmic microtubule nucleation and elongation. Involved in mitotic spindle positioning by stabilizing microtubules and promoting dynamic connection between astral microtubules and the cortex during mitotic chromosome segregation. Assists chromosome alignment in metaphase by recruiting the SKA complex to the spindle and stabilizing its interactions with microtubule bundles (K-fibers). Also acts as a regulator of minus-end microtubule organization: interacts with the complex formed by AKAP9 and PDE4DIP, leading to recruit CAMSAP2 to the Golgi apparatus, thereby tethering non-centrosomal minus-end microtubules to the Golgi, an important step for polarized cell movement. Promotes elongation of CAMSAP2-decorated microtubule stretches on the minus-end of microtubules. Acts as a regulator of autophagosome transport via interaction with CAMSAP2. Functions downstream of Rho GTPases and DIAPH1 in stable microtubule formation. May play a role in cell migration. This Mus musculus (Mouse) protein is Microtubule-associated protein RP/EB family member 1 (Mapre1).